Consider the following 347-residue polypeptide: DNA-directed RNA polymerase subunit alpha (347 aa).

The interval 1-243 (MLFREGTRLI…DQISVFINFD (243 aa)) is alpha N-terminal domain (alpha-NTD). Positions 255 to 347 (SGSSDLNDNL…EWKRKQHHEA (93 aa)) are alpha C-terminal domain (alpha-CTD).

This sequence belongs to the RNA polymerase alpha chain family. As to quaternary structure, homodimer. The RNAP catalytic core consists of 2 alpha, 1 beta, 1 beta' and 1 omega subunit. When a sigma factor is associated with the core the holoenzyme is formed, which can initiate transcription.

The enzyme catalyses RNA(n) + a ribonucleoside 5'-triphosphate = RNA(n+1) + diphosphate. Functionally, DNA-dependent RNA polymerase catalyzes the transcription of DNA into RNA using the four ribonucleoside triphosphates as substrates. In Lawsonia intracellularis (strain PHE/MN1-00), this protein is DNA-directed RNA polymerase subunit alpha.